The primary structure comprises 415 residues: Glutamyl-tRNA reductase (415 aa).

Residues 49 to 52, Ser104, 109 to 111, and Gln115 contribute to the substrate site; these read TCNR and EPQ. Cys50 serves as the catalytic Nucleophile. Residue 184 to 189 coordinates NADP(+); the sequence is GAGEMI.

The protein belongs to the glutamyl-tRNA reductase family. Homodimer.

The enzyme catalyses (S)-4-amino-5-oxopentanoate + tRNA(Glu) + NADP(+) = L-glutamyl-tRNA(Glu) + NADPH + H(+). It functions in the pathway porphyrin-containing compound metabolism; protoporphyrin-IX biosynthesis; 5-aminolevulinate from L-glutamyl-tRNA(Glu): step 1/2. Catalyzes the NADPH-dependent reduction of glutamyl-tRNA(Glu) to glutamate 1-semialdehyde (GSA). The protein is Glutamyl-tRNA reductase of Neisseria gonorrhoeae (strain ATCC 700825 / FA 1090).